Reading from the N-terminus, the 121-residue chain is Large ribosomal subunit protein bL20 (121 aa).

Belongs to the bacterial ribosomal protein bL20 family.

Its function is as follows. Binds directly to 23S ribosomal RNA and is necessary for the in vitro assembly process of the 50S ribosomal subunit. It is not involved in the protein synthesizing functions of that subunit. This Wolbachia pipientis subsp. Culex pipiens (strain wPip) protein is Large ribosomal subunit protein bL20.